The chain runs to 440 residues: Elongation factor 1-gamma (440 aa).

N-acetylalanine is present on Ala2. Positions 2–87 (AAGTLYTYPE…YVSNEELRGS (86 aa)) constitute a GST N-terminal domain. The GST C-terminal domain maps to 88–216 (TPEAAAQVVQ…VKLCEKMAQF (129 aa)). An N6-acetyllysine mark is found at Lys147 and Lys212. Over residues 221–257 (FAESQPKKDTPRKEKGSREEKLKPQAERKEGKEEKKA) the composition is skewed to basic and acidic residues. The segment at 221–267 (FAESQPKKDTPRKEKGSREEKLKPQAERKEGKEEKKAAAPAPEEELD) is disordered. A Glycyl lysine isopeptide (Lys-Gly) (interchain with G-Cter in SUMO1) cross-link involves residue Lys256. An EF-1-gamma C-terminal domain is found at 279–440 (AKDPFAHLPK…KAFNQGKIFK (162 aa)). Lys288 is covalently cross-linked (Glycyl lysine isopeptide (Lys-Gly) (interchain with G-Cter in SUMO2)). Position 404 is an N6-acetyllysine (Lys404). Lys437 bears the N6-acetyllysine; alternate mark. At Lys437 the chain carries N6-malonyllysine; alternate.

As to quaternary structure, EF-1 is composed of four subunits: alpha, beta, delta, and gamma.

Probably plays a role in anchoring the complex to other cellular components. The sequence is that of Elongation factor 1-gamma (EEF1G) from Bos taurus (Bovine).